Here is a 193-residue protein sequence, read N- to C-terminus: ECF RNA polymerase sigma factor SigK (193 aa).

The tract at residues 35 to 101 (LYDRTRSRVY…RRAVDRVRSE (67 aa)) is sigma-70 factor domain-2. Residues 59–62 (ETTQ) carry the Polymerase core binding motif. The interval 140-187 (MGSLSDLQREAIQLAYYEGLTYVQVSERLSANLATIKSRMRGGIRGLK) is sigma-70 factor domain-4. The H-T-H motif DNA-binding region spans 161 to 180 (YVQVSERLSANLATIKSRMR).

This sequence belongs to the sigma-70 factor family. ECF subfamily. In terms of assembly, interacts transiently with the RNA polymerase catalytic core formed by RpoA, RpoB, RpoC and RpoZ (2 alpha, 1 beta, 1 beta' and 1 omega subunit) to form the RNA polymerase holoenzyme that can initiate transcription. Interacts (via sigma-70 factor domain 4) with anti-sigma-K factor RskA.

Its function is as follows. Sigma factors are initiation factors that promote the attachment of RNA polymerase to specific initiation sites and are then released. Extracytoplasmic function (ECF) sigma factors are held in an inactive form by an anti-sigma factor until released by regulated intramembrane proteolysis. The protein is ECF RNA polymerase sigma factor SigK (sigK) of Mycobacterium sp. (strain KMS).